The following is a 216-amino-acid chain: ATP-dependent dethiobiotin synthetase BioD (216 aa).

12-17 (GVGKSY) serves as a coordination point for ATP. Residue Ser16 participates in Mg(2+) binding. The active site involves Lys37. Substrate is bound at residue Thr41. Mg(2+)-binding residues include His53 and Glu115. ATP is bound at residue 115–118 (EGAG).

The protein belongs to the dethiobiotin synthetase family. In terms of assembly, homodimer. Mg(2+) is required as a cofactor.

The protein localises to the cytoplasm. The catalysed reaction is (7R,8S)-7,8-diammoniononanoate + CO2 + ATP = (4R,5S)-dethiobiotin + ADP + phosphate + 3 H(+). Its pathway is cofactor biosynthesis; biotin biosynthesis; biotin from 7,8-diaminononanoate: step 1/2. In terms of biological role, catalyzes a mechanistically unusual reaction, the ATP-dependent insertion of CO2 between the N7 and N8 nitrogen atoms of 7,8-diaminopelargonic acid (DAPA, also called 7,8-diammoniononanoate) to form a ureido ring. This chain is ATP-dependent dethiobiotin synthetase BioD, found in Wolinella succinogenes (strain ATCC 29543 / DSM 1740 / CCUG 13145 / JCM 31913 / LMG 7466 / NCTC 11488 / FDC 602W) (Vibrio succinogenes).